The following is a 1356-amino-acid chain: Pleckstrin homology domain-containing family H member 1 (1356 aa).

The stretch at 27–172 (FRLQASKIRE…QDALEDLRMT (146 aa)) forms a coiled coil. Disordered stretches follow at residues 179 to 203 (VVPE…EQDS), 256 to 314 (HLQK…PKVR), and 354 to 414 (LHSP…PPLH). 3 stretches are compositionally biased toward polar residues: residues 194 to 203 (PSDQPVEQDS), 256 to 265 (HLQKEGSPSQ), and 285 to 297 (VTAQ…GTKT). The stretch at 359–407 (SSKSEARAKVREEAEKMEMEALPPSGKQEERESLKSRRGELEDVELENK) forms a coiled coil. 2 stretches are compositionally biased toward basic and acidic residues: residues 362 to 377 (SEAR…KMEM) and 385 to 399 (KQEE…RGEL). A Phosphoserine modification is found at Ser451. 2 PH domains span residues 572–666 (ALEK…SLLK) and 681–790 (KPTV…VAAG). Residue Ser739 is modified to Phosphoserine. One can recognise a MyTH4 domain in the interval 826-980 (YSQEGLCASL…PSRMEVVSIL (155 aa)). Residues 991-1327 (FSIPVHFANG…NHCSATVNLS (337 aa)) enclose the FERM domain.

The polypeptide is Pleckstrin homology domain-containing family H member 1 (Plekhh1) (Mus musculus (Mouse)).